The sequence spans 104 residues: Iron-sulfur cluster assembly protein CyaY (104 aa).

This sequence belongs to the frataxin family.

Its function is as follows. Involved in iron-sulfur (Fe-S) cluster assembly. May act as a regulator of Fe-S biogenesis. The chain is Iron-sulfur cluster assembly protein CyaY from Vibrio parahaemolyticus serotype O3:K6 (strain RIMD 2210633).